Reading from the N-terminus, the 330-residue chain is MSTASERVRPVVGTMIGDPAGIGPEVAVRALADGAVHTDSIPVLVGSAAAVERALDFTGTKARLRVMRGFEKPSDDPAIIDVIDTGALPDGVLPLGEDTEAAGHATAQWLDELDALARDGSFAATIMGPISTGSLKLAKKLDRVISPTPGESYLVLLTGPLRVAHLTDHMSLRQVIDVISADLVATAVGQLHEAMQSWGIAQPRIAVAGLNPHAMGDEDRLEIAPGIEAARARGIDVEGPIAPDSVFRHCIEGRYDMVLAMFHDQGHIAVKTWGFSGNSVIIMGPPYLHMSVAHGTAYDIVGTGKADAAMMLSAMRTCGRLASGRGFEQA.

Positions 169, 213, and 263 each coordinate a divalent metal cation.

The protein belongs to the PdxA family. As to quaternary structure, homodimer. Zn(2+) is required as a cofactor. Mg(2+) serves as cofactor. Requires Co(2+) as cofactor.

The protein resides in the cytoplasm. The catalysed reaction is 4-(phosphooxy)-L-threonine + NAD(+) = 3-amino-2-oxopropyl phosphate + CO2 + NADH. Its pathway is cofactor biosynthesis; pyridoxine 5'-phosphate biosynthesis; pyridoxine 5'-phosphate from D-erythrose 4-phosphate: step 4/5. In terms of biological role, catalyzes the NAD(P)-dependent oxidation of 4-(phosphooxy)-L-threonine (HTP) into 2-amino-3-oxo-4-(phosphooxy)butyric acid which spontaneously decarboxylates to form 3-amino-2-oxopropyl phosphate (AHAP). The protein is Putative 4-hydroxythreonine-4-phosphate dehydrogenase of Novosphingobium aromaticivorans (Sphingomonas aromaticivorans).